A 153-amino-acid chain; its full sequence is uncharacterized protein (153 aa).

This sequence to M.jannaschii MJ1183.

This is an uncharacterized protein from Methanothermobacter thermautotrophicus (strain ATCC 29096 / DSM 1053 / JCM 10044 / NBRC 100330 / Delta H) (Methanobacterium thermoautotrophicum).